A 283-amino-acid polypeptide reads, in one-letter code: Phosphatidylglycerol--prolipoprotein diacylglyceryl transferase (283 aa).

4 helical membrane-spanning segments follow: residues 20-40 (IGGF…IIGL), 60-80 (LVIW…VAFE), 94-114 (IWQG…AILV), and 121-141 (LSFW…QAIG). Arginine 142 contributes to the a 1,2-diacyl-sn-glycero-3-phospho-(1'-sn-glycerol) binding site. 3 helical membrane-spanning segments follow: residues 183-203 (FLYE…LFFY), 214-234 (GTIT…IEGL), and 248-268 (QVVS…LYLL).

Belongs to the Lgt family.

It localises to the cell inner membrane. It catalyses the reaction L-cysteinyl-[prolipoprotein] + a 1,2-diacyl-sn-glycero-3-phospho-(1'-sn-glycerol) = an S-1,2-diacyl-sn-glyceryl-L-cysteinyl-[prolipoprotein] + sn-glycerol 1-phosphate + H(+). Its pathway is protein modification; lipoprotein biosynthesis (diacylglyceryl transfer). Catalyzes the transfer of the diacylglyceryl group from phosphatidylglycerol to the sulfhydryl group of the N-terminal cysteine of a prolipoprotein, the first step in the formation of mature lipoproteins. The chain is Phosphatidylglycerol--prolipoprotein diacylglyceryl transferase from Synechocystis sp. (strain ATCC 27184 / PCC 6803 / Kazusa).